The following is a 249-amino-acid chain: 2,3-bisphosphoglycerate-dependent phosphoglycerate mutase (249 aa).

Residues 9–16, 22–23, Arg61, 88–91, Lys99, 115–116, and 184–185 contribute to the substrate site; these read RHGQSQWN, TG, ERHY, RR, and GN. The Tele-phosphohistidine intermediate role is filled by His10. Glu88 serves as the catalytic Proton donor/acceptor.

Belongs to the phosphoglycerate mutase family. BPG-dependent PGAM subfamily. Homodimer.

It carries out the reaction (2R)-2-phosphoglycerate = (2R)-3-phosphoglycerate. It participates in carbohydrate degradation; glycolysis; pyruvate from D-glyceraldehyde 3-phosphate: step 3/5. Catalyzes the interconversion of 2-phosphoglycerate and 3-phosphoglycerate. This Stenotrophomonas maltophilia (strain K279a) protein is 2,3-bisphosphoglycerate-dependent phosphoglycerate mutase.